The chain runs to 370 residues: GTPase Obg (370 aa).

One can recognise an Obg domain in the interval 1 to 159 (MKFIDEARIE…RMLRLELKVL (159 aa)). Residues 127 to 146 (NLHFKSSTNRAPRQKTDGKP) are disordered. Positions 160–334 (ADVGLLGMPN…LCYAIYDYLA (175 aa)) constitute an OBG-type G domain. GTP contacts are provided by residues 166 to 173 (GMPNAGKS), 191 to 195 (FTTLA), 213 to 216 (DIPG), 284 to 287 (NKLD), and 315 to 317 (SAL). Residues serine 173 and threonine 193 each coordinate Mg(2+). The disordered stretch occupies residues 350–370 (ADVRFRDAPPSDGGATSGGDA).

Belongs to the TRAFAC class OBG-HflX-like GTPase superfamily. OBG GTPase family. As to quaternary structure, monomer. Requires Mg(2+) as cofactor.

Its subcellular location is the cytoplasm. An essential GTPase which binds GTP, GDP and possibly (p)ppGpp with moderate affinity, with high nucleotide exchange rates and a fairly low GTP hydrolysis rate. Plays a role in control of the cell cycle, stress response, ribosome biogenesis and in those bacteria that undergo differentiation, in morphogenesis control. The chain is GTPase Obg from Burkholderia vietnamiensis (strain G4 / LMG 22486) (Burkholderia cepacia (strain R1808)).